Reading from the N-terminus, the 153-residue chain is Superoxide dismutase [Cu-Zn] (153 aa).

Asparagine 24 carries an N-linked (GlcNAc...) asparagine glycan. Cu cation contacts are provided by histidine 47, histidine 49, and histidine 64. Cysteine 58 and cysteine 147 are disulfide-bonded. Residues histidine 64, histidine 72, histidine 81, and aspartate 84 each contribute to the Zn(2+) site. Histidine 121 provides a ligand contact to Cu cation. The segment covering 126 to 137 (DLGRGGNEESKK) has biased composition (basic and acidic residues). The tract at residues 126–145 (DLGRGGNEESKKTGNAGPRP) is disordered. Residue arginine 144 participates in substrate binding.

This sequence belongs to the Cu-Zn superoxide dismutase family. As to quaternary structure, homodimer. It depends on Cu cation as a cofactor. The cofactor is Zn(2+).

The protein resides in the cytoplasm. It catalyses the reaction 2 superoxide + 2 H(+) = H2O2 + O2. Destroys radicals which are normally produced within the cells and which are toxic to biological systems. In Humicola lutea, this protein is Superoxide dismutase [Cu-Zn].